The following is a 390-amino-acid chain: Leu/Ile/Val-binding protein homolog 6 (390 aa).

A signal peptide spans 1 to 21 (MKKIALTALAVFSLAASAAYA).

Belongs to the leucine-binding protein family.

Functionally, component of an amino-acid transport system. The chain is Leu/Ile/Val-binding protein homolog 6 from Brucella suis biovar 1 (strain 1330).